A 339-amino-acid polypeptide reads, in one-letter code: NADH-quinone oxidoreductase subunit H (339 aa).

Transmembrane regions (helical) follow at residues 10–30, 50–70, 82–102, 115–135, 161–181, 187–207, 235–255, 275–295, and 310–330; these read FPLI…ILCV, PNVV…KLLF, ILFI…WAVV, VGVL…IIAG, MGLV…SGII, IPWW…ISVL, MGFA…SAMT, IPGF…FLWI, and LGWK…SSVL.

This sequence belongs to the complex I subunit 1 family. NDH-1 is composed of 14 different subunits. Subunits NuoA, H, J, K, L, M, N constitute the membrane sector of the complex.

It is found in the cell inner membrane. The enzyme catalyses a quinone + NADH + 5 H(+)(in) = a quinol + NAD(+) + 4 H(+)(out). Functionally, NDH-1 shuttles electrons from NADH, via FMN and iron-sulfur (Fe-S) centers, to quinones in the respiratory chain. The immediate electron acceptor for the enzyme in this species is believed to be ubiquinone. Couples the redox reaction to proton translocation (for every two electrons transferred, four hydrogen ions are translocated across the cytoplasmic membrane), and thus conserves the redox energy in a proton gradient. This subunit may bind ubiquinone. In Rickettsia canadensis (strain McKiel), this protein is NADH-quinone oxidoreductase subunit H.